The sequence spans 240 residues: Ubiquinone biosynthesis O-methyltransferase (240 aa).

S-adenosyl-L-methionine contacts are provided by R44, G64, D85, and M129.

Belongs to the methyltransferase superfamily. UbiG/COQ3 family.

It catalyses the reaction a 3-demethylubiquinol + S-adenosyl-L-methionine = a ubiquinol + S-adenosyl-L-homocysteine + H(+). The enzyme catalyses a 3-(all-trans-polyprenyl)benzene-1,2-diol + S-adenosyl-L-methionine = a 2-methoxy-6-(all-trans-polyprenyl)phenol + S-adenosyl-L-homocysteine + H(+). It functions in the pathway cofactor biosynthesis; ubiquinone biosynthesis. O-methyltransferase that catalyzes the 2 O-methylation steps in the ubiquinone biosynthetic pathway. This is Ubiquinone biosynthesis O-methyltransferase from Escherichia coli (strain SMS-3-5 / SECEC).